The chain runs to 157 residues: SsrA-binding protein (157 aa).

This sequence belongs to the SmpB family.

Its subcellular location is the cytoplasm. Functionally, required for rescue of stalled ribosomes mediated by trans-translation. Binds to transfer-messenger RNA (tmRNA), required for stable association of tmRNA with ribosomes. tmRNA and SmpB together mimic tRNA shape, replacing the anticodon stem-loop with SmpB. tmRNA is encoded by the ssrA gene; the 2 termini fold to resemble tRNA(Ala) and it encodes a 'tag peptide', a short internal open reading frame. During trans-translation Ala-aminoacylated tmRNA acts like a tRNA, entering the A-site of stalled ribosomes, displacing the stalled mRNA. The ribosome then switches to translate the ORF on the tmRNA; the nascent peptide is terminated with the 'tag peptide' encoded by the tmRNA and targeted for degradation. The ribosome is freed to recommence translation, which seems to be the essential function of trans-translation. The sequence is that of SsrA-binding protein from Clostridium kluyveri (strain NBRC 12016).